Consider the following 127-residue polypeptide: Glycine cleavage system H protein (127 aa).

One can recognise a Lipoyl-binding domain in the interval 22–104; that stretch reads EVVIGITHFA…YEGAWMVKVE (83 aa). Residue lysine 63 is modified to N6-lipoyllysine.

It belongs to the GcvH family. As to quaternary structure, the glycine cleavage system is composed of four proteins: P, T, L and H. Requires (R)-lipoate as cofactor.

In terms of biological role, the glycine cleavage system catalyzes the degradation of glycine. The H protein shuttles the methylamine group of glycine from the P protein to the T protein. Its function is as follows. Is also involved in protein lipoylation via its role as an octanoyl/lipoyl carrier protein intermediate. The chain is Glycine cleavage system H protein from Bacillus cereus (strain ZK / E33L).